A 373-amino-acid chain; its full sequence is Zn(2)-C6 fungal-type transcription factor afumD (373 aa).

The segment at Met-1–Thr-48 is disordered. The span at Arg-33 to Thr-48 shows a compositional bias: basic residues. Residues Cys-50–Cys-77 constitute a DNA-binding region (zn(2)-C6 fungal-type). The interval Gly-86–Ala-110 is disordered.

It localises to the nucleus. Functionally, zn(2)-C6 fungal-type transcription factor; part of the gene cluster that mediates the biosynthesis fumihopaside A, a hopane-type glucoside that enhances the thermotolerance and UV resistance of N.fumigata. This is Zn(2)-C6 fungal-type transcription factor afumD from Aspergillus fumigatus (strain CBS 144.89 / FGSC A1163 / CEA10) (Neosartorya fumigata).